A 199-amino-acid chain; its full sequence is Imidazoleglycerol-phosphate dehydratase (199 aa).

It belongs to the imidazoleglycerol-phosphate dehydratase family.

It is found in the cytoplasm. It catalyses the reaction D-erythro-1-(imidazol-4-yl)glycerol 3-phosphate = 3-(imidazol-4-yl)-2-oxopropyl phosphate + H2O. The protein operates within amino-acid biosynthesis; L-histidine biosynthesis; L-histidine from 5-phospho-alpha-D-ribose 1-diphosphate: step 6/9. This is Imidazoleglycerol-phosphate dehydratase from Bifidobacterium longum (strain NCC 2705).